The primary structure comprises 798 residues: Metabotropic glutamate receptor-like protein A (798 aa).

Positions 1-23 (MNKLKFLIILFITFLFNLKYINS) are cleaved as a signal peptide. The Extracellular portion of the chain corresponds to 24–388 (LKQCKISVLL…DYSNSMKLGL (365 aa)). Asn186, Asn275, and Asn320 each carry an N-linked (GlcNAc...) asparagine glycan. The helical transmembrane segment at 389-409 (TIVSGFCILFCIISMVLVIMF) threads the bilayer. Residues 410–419 (RHAKIIKSAS) are Cytoplasmic-facing. A helical transmembrane segment spans residues 420–440 (PIFCLLILFGCIIIFSGCIIF). Residues 441 to 447 (SLSPTDG) lie on the Extracellular side of the membrane. A helical transmembrane segment spans residues 448–468 (ICGARVWLLSIGYTIFLGSLL). The Cytoplasmic portion of the chain corresponds to 469-494 (VKNWRIWLLFDNPKLKKRSITNWKLY). The helical transmembrane segment at 495–515 (PFVAGILAADVLILALWQGLG) threads the bilayer. Topologically, residues 516-545 (DIRSESRIGIDSLTKYQYANVCSSNDQGSV) are extracellular. The chain crosses the membrane as a helical span at residues 546–566 (ALYILLVFHGIKLLAACFISF). At 567–580 (KIKAVDIEEFNESK) the chain is on the cytoplasmic side. The helical transmembrane segment at 581–601 (PIASSIYIITFCLFIVIPLMV) threads the bilayer. Topologically, residues 602 to 609 (SPQSVASQ) are extracellular. Residues 610–630 (VITIVVCAIVTTLISISLLFG) form a helical membrane-spanning segment. Over 631–798 (SKFYMMATQG…NQSEIDPDDV (168 aa)) the chain is Cytoplasmic. Positions 714-771 (AEQDSKLDLENQNDENEIENNQNNQNNIVEDCQKVEKLEKDENLEKDENLEKDENLEK) form a coiled coil. The segment covering 752 to 774 (EKDENLEKDENLEKDENLEKDNE) has biased composition (basic and acidic residues). Residues 752–798 (EKDENLEKDENLEKDENLEKDNENQSIIQKKRLSKNFNQSEIDPDDV) are disordered.

This sequence in the N-terminal section; belongs to the BMP lipoprotein family. It in the C-terminal section; belongs to the G-protein coupled receptor 3 family. GABA-B receptor subfamily.

Its subcellular location is the membrane. The protein localises to the cytoplasm. It is found in the cell cortex. It localises to the perinuclear region. In terms of biological role, may play an important role in the terminal differentiation. The polypeptide is Metabotropic glutamate receptor-like protein A (grlA) (Dictyostelium discoideum (Social amoeba)).